A 404-amino-acid chain; its full sequence is Cysteine desulfurase IscS (404 aa).

Residues 73 to 74 (AT), N153, Q181, and 201 to 203 (SAH) each bind pyridoxal 5'-phosphate. The residue at position 204 (K204) is an N6-(pyridoxal phosphate)lysine. T241 contacts pyridoxal 5'-phosphate. Residue C327 is the Cysteine persulfide intermediate of the active site. C327 contacts [2Fe-2S] cluster.

This sequence belongs to the class-V pyridoxal-phosphate-dependent aminotransferase family. NifS/IscS subfamily. As to quaternary structure, homodimer. Forms a heterotetramer with IscU, interacts with other sulfur acceptors. Pyridoxal 5'-phosphate serves as cofactor.

The protein localises to the cytoplasm. The enzyme catalyses (sulfur carrier)-H + L-cysteine = (sulfur carrier)-SH + L-alanine. It functions in the pathway cofactor biosynthesis; iron-sulfur cluster biosynthesis. Functionally, master enzyme that delivers sulfur to a number of partners involved in Fe-S cluster assembly, tRNA modification or cofactor biosynthesis. Catalyzes the removal of elemental sulfur atoms from cysteine to produce alanine. Functions as a sulfur delivery protein for Fe-S cluster synthesis onto IscU, an Fe-S scaffold assembly protein, as well as other S acceptor proteins. This chain is Cysteine desulfurase IscS, found in Anaeromyxobacter sp. (strain K).